A 1024-amino-acid polypeptide reads, in one-letter code: PH and SEC7 domain-containing protein 1 (1024 aa).

Disordered regions lie at residues 25–98, 113–230, 246–401, and 430–536; these read WLPE…GAQS, PLNG…EVSS, SLDP…GPDS, and ASPG…LDST. Positions 71–95 are enriched in pro residues; it reads RGPPSPRVAPSPWAPSSPTGQPPPG. Phosphoserine occurs at positions 126 and 156. Positions 215–230 are enriched in polar residues; it reads FLNQGDTWSSPREVSS. A compositionally biased stretch (acidic residues) spans 300 to 313; it reads DIDEVLAEREEADS. The span at 327–342 shows a compositional bias: pro residues; sequence TAYPPAPRPGPLPGPH. The segment covering 349–369 has biased composition (acidic residues); sequence NEDEDDDEAGGEEDVDDEVFE. Positions 445 to 463 are enriched in pro residues; it reads PPQPPAPRPDPPAPAPLAP. The region spanning 512–706 is the SEC7 domain; the sequence is GAAPLGSEPP…KALYSSIKNE (195 aa). Residue Ser720 is modified to Phosphoserine. Residues 756–869 enclose the PH domain; sequence AVYKHGALVR…WITRINVVAA (114 aa). Residues 898 to 924 are a coiled coil; the sequence is LSQEEQVRTHEAKLKAMASELREHRAA. The interval 976-1024 is disordered; it reads ALAQAGSTEDGLPPSHSSPSLQPKPSSQPRAQRHSSEPRPGAGSGRRKP. Low complexity predominate over residues 987–1004; that stretch reads LPPSHSSPSLQPKPSSQP.

This sequence belongs to the PSD family. In terms of assembly, interacts with ACTN1. Interacts (ARF6-bound form) with KCNK1; does not interact with KCNK1 in the absence of ARF6. Isoform 2 is expressed in the brain.

The protein localises to the cell membrane. Its subcellular location is the cell projection. The protein resides in the ruffle membrane. It is found in the cleavage furrow. In terms of biological role, guanine nucleotide exchange factor for ARF6. Induces cytoskeletal remodeling. In Homo sapiens (Human), this protein is PH and SEC7 domain-containing protein 1 (PSD).